Here is a 528-residue protein sequence, read N- to C-terminus: Cytochrome P450 monooxygenase vrcB (528 aa).

A helical transmembrane segment spans residues 5-27 (YGLFFAAVALYSVALVIYRLYLH). Cysteine 470 provides a ligand contact to heme.

The protein belongs to the cytochrome P450 family. The cofactor is heme.

Its subcellular location is the membrane. It carries out the reaction variecoladiene + 4 reduced [NADPH--hemoprotein reductase] + 4 O2 = variecolin + 4 oxidized [NADPH--hemoprotein reductase] + 6 H2O + 4 H(+). It functions in the pathway secondary metabolite biosynthesis; terpenoid biosynthesis. Its function is as follows. Cytochrome P450 monooxygenase; part of the gene cluster that mediates the biosynthesis of the sesterterpene variecolin. The first step in the pathway is performed by the variecoladiene synthase vrcA that possesses both prenyl transferase and terpene cyclase activity, converting isopentenyl diphosphate and dimethylallyl diphosphate into geranylfarnesyl pyrophosphate (GFPP) and then converting GFPP into the tetracyclic variecoladiene. The cytochrome P450 monooxygenase vrcB then catalyzes multiple oxidations at C-5 and C-20 positions to yield variecolin. The polypeptide is Cytochrome P450 monooxygenase vrcB (Aspergillus aculeatus (strain ATCC 16872 / CBS 172.66 / WB 5094)).